The primary structure comprises 169 residues: Protein FAM106A (169 aa).

The protein belongs to the FAM106 family.

The protein is Protein FAM106A (FAM106A) of Homo sapiens (Human).